We begin with the raw amino-acid sequence, 626 residues long: Probable serine/threonine-protein kinase CCRP1 (626 aa).

Residues 36–291 enclose the Protein kinase domain; the sequence is YSKGRMLGKG…LDEILQHPFL (256 aa). Residues 42 to 50 and K65 contribute to the ATP site; that span reads LGKGGFAKC. A Phosphoserine modification is found at S71. D159 (proton acceptor) is an active-site residue. The interval 399–433 is disordered; the sequence is NFTKTGSWQSNLNGTQSVKGSSRPQTVQQKGDLKS. Residues 400–427 show a composition bias toward polar residues; it reads FTKTGSWQSNLNGTQSVKGSSRPQTVQQ. POLO box domains follow at residues 471 to 554 and 574 to 626; these read WVKK…YLEG and YVKK…PISP.

The protein belongs to the protein kinase superfamily. Ser/Thr protein kinase family. CDC5/Polo subfamily. In terms of tissue distribution, embryo.

The enzyme catalyses L-seryl-[protein] + ATP = O-phospho-L-seryl-[protein] + ADP + H(+). It catalyses the reaction L-threonyl-[protein] + ATP = O-phospho-L-threonyl-[protein] + ADP + H(+). Its function is as follows. May play a role in the division of some cell types. The chain is Probable serine/threonine-protein kinase CCRP1 (CCRP1) from Zea mays (Maize).